The chain runs to 326 residues: Putative HTH-type transcriptional regulatory protein MMP0678 (326 aa).

Positions 128–183 (LRETREKLKISVGELAEVSRVSRKTIYKYEQNEANPSAEVAIKIEEYLDVPLIKGI) constitute an HTH cro/C1-type domain. Residues 139–158 (VGELAEVSRVSRKTIYKYEQ) constitute a DNA-binding region (H-T-H motif).

In Methanococcus maripaludis (strain DSM 14266 / JCM 13030 / NBRC 101832 / S2 / LL), this protein is Putative HTH-type transcriptional regulatory protein MMP0678.